Here is a 249-residue protein sequence, read N- to C-terminus: Probable transcriptional regulatory protein Dtur_1615 (249 aa).

Belongs to the TACO1 family.

The protein localises to the cytoplasm. This Dictyoglomus turgidum (strain DSM 6724 / Z-1310) protein is Probable transcriptional regulatory protein Dtur_1615.